The primary structure comprises 141 residues: Large ribosomal subunit protein uL22 (141 aa).

The tract at residues Glu-110–Ser-141 is disordered. Residues Lys-117–Lys-134 show a composition bias toward low complexity.

Belongs to the universal ribosomal protein uL22 family. In terms of assembly, part of the 50S ribosomal subunit.

In terms of biological role, this protein binds specifically to 23S rRNA; its binding is stimulated by other ribosomal proteins, e.g. L4, L17, and L20. It is important during the early stages of 50S assembly. It makes multiple contacts with different domains of the 23S rRNA in the assembled 50S subunit and ribosome. The globular domain of the protein is located near the polypeptide exit tunnel on the outside of the subunit, while an extended beta-hairpin is found that lines the wall of the exit tunnel in the center of the 70S ribosome. In Campylobacter jejuni (strain RM1221), this protein is Large ribosomal subunit protein uL22.